The primary structure comprises 225 residues: Heptaprenylglyceryl phosphate synthase (225 aa).

Residue K6 coordinates sn-glycerol 1-phosphate. Mg(2+) is bound by residues D8 and T34. Residues 153–158, G183, and 203–204 each bind sn-glycerol 1-phosphate; these read YIEYSG and GN.

The protein belongs to the GGGP/HepGP synthase family. Group I subfamily. As to quaternary structure, homodimer. It depends on Mg(2+) as a cofactor.

It catalyses the reaction sn-glycerol 1-phosphate + all-trans-heptaprenyl diphosphate = 3-heptaprenyl-sn-glycero-1-phosphate + diphosphate. The protein operates within membrane lipid metabolism; glycerophospholipid metabolism. Prenyltransferase that catalyzes in vivo the transfer of the heptaprenyl moiety of heptaprenyl pyrophosphate (HepPP; 35 carbon atoms) to the C3 hydroxyl of sn-glycerol-1-phosphate (G1P), producing heptaprenylglyceryl phosphate (HepGP). This reaction is an ether-bond-formation step in the biosynthesis of archaea-type G1P-based membrane lipids found in Bacillales. The sequence is that of Heptaprenylglyceryl phosphate synthase from Listeria welshimeri serovar 6b (strain ATCC 35897 / DSM 20650 / CCUG 15529 / CIP 8149 / NCTC 11857 / SLCC 5334 / V8).